The sequence spans 275 residues: DNA polymerase II subunit B4 (275 aa).

Residues 11 to 17 (LPLAIVR) mediate DNA binding. A compositionally biased stretch (low complexity) spans 112–122 (ASYPAGGAALK). Positions 112 to 275 (ASYPAGGAAL…EEVESDEEDE (164 aa)) are disordered. Residues 135–142 (KKRKQEEP) carry the Nuclear localization signal motif. The segment covering 151–161 (SKIDEETKRND) has biased composition (basic and acidic residues). Residues 152-179 (KIDEETKRNDEETENDNTEEENGNDEED) are a coiled coil. 2 stretches are compositionally biased toward acidic residues: residues 162–237 (EETE…EESG) and 266–275 (EEVESDEEDE).

This sequence belongs to the NFYB/HAP3 subunit family. In terms of assembly, heterotrimeric transcription factor composed of three components, NF-YA, NF-YB and NF-YC. NF-YB and NF-YC must interact and dimerize for NF-YA association and DNA binding. Binds directly with DPB3-1.

The protein resides in the nucleus. Functionally, component of the NF-Y/HAP transcription factor complex. The NF-Y complex stimulates the transcription of various genes by recognizing and binding to a CCAAT motif in promoters. The protein is DNA polymerase II subunit B4 of Arabidopsis thaliana (Mouse-ear cress).